Here is a 344-residue protein sequence, read N- to C-terminus: Phosphate acyltransferase (344 aa).

Belongs to the PlsX family. As to quaternary structure, homodimer. Probably interacts with PlsY.

The protein localises to the cytoplasm. The catalysed reaction is a fatty acyl-[ACP] + phosphate = an acyl phosphate + holo-[ACP]. Its pathway is lipid metabolism; phospholipid metabolism. Catalyzes the reversible formation of acyl-phosphate (acyl-PO(4)) from acyl-[acyl-carrier-protein] (acyl-ACP). This enzyme utilizes acyl-ACP as fatty acyl donor, but not acyl-CoA. The polypeptide is Phosphate acyltransferase (Enterobacter sp. (strain 638)).